A 147-amino-acid chain; its full sequence is Ribonuclease H (147 aa).

An RNase H type-1 domain is found at 1-142 (MREVIIYTDG…CDELARAAIA (142 aa)). Mg(2+)-binding residues include D9, E47, D69, and D134.

This sequence belongs to the RNase H family. In terms of assembly, monomer. Requires Mg(2+) as cofactor.

It localises to the cytoplasm. The catalysed reaction is Endonucleolytic cleavage to 5'-phosphomonoester.. Its function is as follows. Endonuclease that specifically degrades the RNA of RNA-DNA hybrids. This Symbiobacterium thermophilum (strain DSM 24528 / JCM 14929 / IAM 14863 / T) protein is Ribonuclease H.